We begin with the raw amino-acid sequence, 442 residues long: Trigger factor (442 aa).

The PPIase FKBP-type domain occupies 165-250 (DDRVIIDFEG…LQKVMAPELP (86 aa)).

This sequence belongs to the FKBP-type PPIase family. Tig subfamily.

Its subcellular location is the cytoplasm. The catalysed reaction is [protein]-peptidylproline (omega=180) = [protein]-peptidylproline (omega=0). Its function is as follows. Involved in protein export. Acts as a chaperone by maintaining the newly synthesized protein in an open conformation. Functions as a peptidyl-prolyl cis-trans isomerase. In Coxiella burnetii (strain CbuK_Q154) (Coxiella burnetii (strain Q154)), this protein is Trigger factor.